A 592-amino-acid chain; its full sequence is Putative phosphatidylinositol 4-kinase alpha-like protein P2 (592 aa).

Residues 180-318 are pleckstrin homology (PH) domain conferring phosphoinositide binding specificity; sequence EQLVEENTGS…ISWQAAIFKL (139 aa). A PI3K/PI4K catalytic domain is found at 275-576; it reads KVKRCGVSEL…VIQSCFLSNR (302 aa). A G-loop region spans residues 281-287; sequence VSELEKE. The segment at 441-449 is catalytic loop; sequence QIKDRHNGN. An activation loop region spans residues 460 to 484; the sequence is HIDFGFMFESSPGGNLGWEPDIKLT.

The protein belongs to the PI3/PI4-kinase family. Type III PI4K subfamily.

The sequence is that of Putative phosphatidylinositol 4-kinase alpha-like protein P2 (PI4KAP2) from Homo sapiens (Human).